The following is a 95-amino-acid chain: Acylphosphatase (95 aa).

Residues 5-93 (RAHVFIRGKV…GEFKDFKILP (89 aa)) form the Acylphosphatase-like domain. Residues arginine 20 and asparagine 38 contribute to the active site.

This sequence belongs to the acylphosphatase family.

It carries out the reaction an acyl phosphate + H2O = a carboxylate + phosphate + H(+). This is Acylphosphatase (acyP) from Pyrobaculum aerophilum (strain ATCC 51768 / DSM 7523 / JCM 9630 / CIP 104966 / NBRC 100827 / IM2).